The chain runs to 339 residues: DNA repair protein RAD51 homolog 1 (339 aa).

The interval 1 to 22 (MAMQMQLEASADTSVEEESFGP) is disordered. Alanine 2 carries the N-acetylalanine modification. The residue at position 13 (threonine 13) is a Phosphothreonine. The residue at position 14 (serine 14) is a Phosphoserine. A HhH domain is found at 48-77 (TVEAVAYAPKKELINIKGISEAKADKILTE). Phosphotyrosine; by ABL1 is present on tyrosine 54. Residues lysine 58 and lysine 64 each participate in a glycyl lysine isopeptide (Lys-Gly) (interchain with G-Cter in ubiquitin) cross-link. 127-134 (GEFRTGKT) serves as a coordination point for ATP. The tract at residues 184–257 (DVLDNVAYAR…FLRMLLRLAD (74 aa)) is interaction with PALB2. The Nuclear export signal; masked by the interaction with BRCA2 signature appears at 245–260 (LARFLRMLLRLADEFG). The residue at position 309 (threonine 309) is a Phosphothreonine; by CHEK1.

It belongs to the RecA family. RAD51 subfamily. Forms linear homooligomers, giving rise to a RAD51 nucleoprotein filament, which is essential for strand-pairing reactions during DNA recombination. Interacts with BRCA1 and either directly or indirectly with p53. Interacts with XRCC3, RAD54L and RAD54B. Interacts with the BCDX2 subcomplex RAD51C:RAD51B. Component of the homologous recombination repair (HR) complex composed of ERCC5/XPG, BRCA2, PALB2, DSS1 and RAD51. Interacts directly with PALB2 which may serve as a scaffold for a HR complex containing PALB2, BRCA2, RAD51C, RAD51 and XRCC3. Interacts with RAD51AP1 and RAD51AP2. Interacts with CHEK1, and this may require prior phosphorylation of CHEK1. Interacts with the MND1-PSMC3IP heterodimer. Found in a complex, at least composed of BLM, RAD51 and SPIDR; the complex formation is mediated by SPIDR. Interacts with SPIDR; the interaction is direct and recruits RAD51 to DNA damage sites. Interacts with FIGNL1 (via N-terminal one-half region); the interaction is direct. Interacts with RAD51AP1 (via C-terminal region); the interaction is direct. Interacts with NABP2, RPA1, PALB2 and RAD51. Interacts with SWI5/C9orf119, and at lower level with SFR1/MEIR5. Interacts with hyperphosphorylated RPA2; this interaction is necessary for efficient recruitment to chromatin in response to DNA damage. Interacts with SWSAP1; involved in homologous recombination repair. Interacts with PARPBP, BRCA2 and RECQL5; these interactions interfere with the formation of the RAD51-DNA homologous recombination structure. Interacts with POLQ; POLQ acts as an inhibitor of homology-recombination repair (HR) pathway by limiting RAD51 accumulation at resected ends. Interacts with POLN. Interacts with FBH1. Interacts with RFWD3. Interacts with the MCM8-MCM9 complex; the interaction recruits RAD51 to DNA damage sites. Component of a multiprotein complex with MEIOB and SPATA22. Interacts with the complex BRME1:HSF2BP:BRCA2. Interacts with HELQ; stimulating HELQ DNA helicase activity and ability to unwing DNA. Interacts with MMS22L; the interaction is direct and promotes recruitment of RAD51 to sites of DNA damage. Interacts with the ATAD5 RFC-like complex. Within the ATAD5 RFC-like complex, interacts with ATAD5 (via N-terminus); the interaction is direct and enhanced under replication stress. Interacts with WDR48; the interaction is enhanced under replication stress. Interacts with DNA helicase ZGRF1; the interaction promotes RAD51 strand exchange activity. Interacts (when phosphorylated) with TOPBP1; interaction takes place following phosphorylation by CK2 and PLK1 and promotes recruitment to DNA damage sites. Interacts with GRB2; this interaction inhibits RAD51 ATPase activity to stabilize RAD51 on stalled replication forks. Post-translationally, ubiquitinated by the SCF(FBH1) E3 ubiquitin ligase complex, regulating RAD51 subcellular location and preventing its association with DNA. Ubiquitinated by RFWD3 in response to DNA damage: ubiquitination leads to degradation by the proteasome, promoting homologous recombination. In terms of processing, phosphorylation of Thr-309 by CHEK1 may enhance association with chromatin at sites of DNA damage and promote DNA repair by homologous recombination. Phosphorylated at Ser-14 by PLK1, triggering phosphorylation at Thr-13 by CK2, thereby promoting interaction with TOPBP1 and recruitment to DNA damage sites during S-phase. Phosphorylation by ABL1 inhibits function. Expressed in the testes (at protein level). Expressed in the brain (at protein level). Expressed in the thymus, spleen, ovary and small intestine.

It localises to the nucleus. Its subcellular location is the cytoplasm. The protein resides in the perinuclear region. The protein localises to the mitochondrion matrix. It is found in the chromosome. It localises to the cytoskeleton. Its subcellular location is the microtubule organizing center. The protein resides in the centrosome. Plays an important role in homologous strand exchange, a key step in DNA repair through homologous recombination (HR). Binds to single-stranded DNA in an ATP-dependent manner to form nucleoprotein filaments which are essential for the homology search and strand exchange. Catalyzes the recognition of homology and strand exchange between homologous DNA partners to form a joint molecule between a processed DNA break and the repair template. Recruited to resolve stalled replication forks during replication stress. Part of a PALB2-scaffolded HR complex containing BRCA2 and RAD51C and which is thought to play a role in DNA repair by HR. Plays a role in regulating mitochondrial DNA copy number under conditions of oxidative stress in the presence of RAD51C and XRCC3. Also involved in interstrand cross-link repair. This is DNA repair protein RAD51 homolog 1 from Mus musculus (Mouse).